The chain runs to 427 residues: UDP-N-acetyl-D-mannosamine dehydrogenase (427 aa).

NAD(+) is bound by residues Tyr-19, Ile-20, Asp-39, Arg-44, Thr-91, and Thr-130. 8 residues coordinate UDP-N-acetyl-alpha-D-mannosaminouronate: Arg-155, Val-156, Lys-207, Asn-211, Arg-214, His-245, Arg-247, and Gly-258. The active-site Proton donor/acceptor is the Lys-207. Cys-261 serves as the catalytic Nucleophile. UDP-N-acetyl-alpha-D-mannosaminouronate contacts are provided by Tyr-318 and Lys-319. Arg-326 serves as a coordination point for NAD(+). UDP-N-acetyl-alpha-D-mannosaminouronate is bound at residue Lys-404.

Belongs to the UDP-glucose/GDP-mannose dehydrogenase family. In terms of assembly, homotetramer; probably dimer of dimers.

It carries out the reaction UDP-N-acetyl-alpha-D-mannosamine + 2 NAD(+) + H2O = UDP-N-acetyl-alpha-D-mannosaminouronate + 2 NADH + 3 H(+). In terms of biological role, catalyzes the four-electron oxidation of UDP-N-acetyl-D-mannosamine (UDP-ManNAc), reducing NAD(+) and releasing UDP-N-acetylmannosaminuronic acid (UDP-ManNAcA). Cannot use NADP instead of NAD. This Methanococcus maripaludis (strain DSM 14266 / JCM 13030 / NBRC 101832 / S2 / LL) protein is UDP-N-acetyl-D-mannosamine dehydrogenase (wecC).